The primary structure comprises 221 residues: NADH-ubiquinone oxidoreductase chain 4 (221 aa).

Transmembrane regions (helical) follow at residues 20–40 (ALIA…LLTM), 45–65 (LTGS…LFCL), 78–98 (LLIN…WFLL), 121–141 (IVSW…FSAA), and 170–190 (FLLL…SNFC).

This sequence belongs to the complex I subunit 4 family.

The protein resides in the mitochondrion membrane. It carries out the reaction a ubiquinone + NADH + 5 H(+)(in) = a ubiquinol + NAD(+) + 4 H(+)(out). Its function is as follows. Core subunit of the mitochondrial membrane respiratory chain NADH dehydrogenase (Complex I) that is believed to belong to the minimal assembly required for catalysis. Complex I functions in the transfer of electrons from NADH to the respiratory chain. The immediate electron acceptor for the enzyme is believed to be ubiquinone. The protein is NADH-ubiquinone oxidoreductase chain 4 (ND4) of Anopheles arabiensis (Mosquito).